The sequence spans 439 residues: Probable aspartic-type endopeptidase AFUA_3G01220 (439 aa).

An N-terminal signal peptide occupies residues 1–20 (MHFSIGSLFLYLIASASCTA). The segment at 31 to 50 (RTPFTTSTSKPSAFTNPSTD) is disordered. Low complexity predominate over residues 32–45 (TPFTTSTSKPSAFT). Residues 95 to 436 (FATSINIGNQ…DVGAAEMRFA (342 aa)) form the Peptidase A1 domain. Asn-103 carries N-linked (GlcNAc...) asparagine glycosylation. Asp-111 is an active-site residue. 7 N-linked (GlcNAc...) asparagine glycosylation sites follow: Asn-149, Asn-178, Asn-187, Asn-253, Asn-256, Asn-276, and Asn-308. The active site involves Asp-323. Asn-361 and Asn-394 each carry an N-linked (GlcNAc...) asparagine glycan.

It belongs to the peptidase A1 family.

It is found in the secreted. Probable aspartic-type endopeptidase which contributes to virulence. The sequence is that of Probable aspartic-type endopeptidase AFUA_3G01220 from Aspergillus fumigatus (strain ATCC MYA-4609 / CBS 101355 / FGSC A1100 / Af293) (Neosartorya fumigata).